Consider the following 125-residue polypeptide: Holo-[acyl-carrier-protein] synthase (125 aa).

2 residues coordinate Mg(2+): Asp8 and Glu57.

This sequence belongs to the P-Pant transferase superfamily. AcpS family. Requires Mg(2+) as cofactor.

The protein resides in the cytoplasm. The catalysed reaction is apo-[ACP] + CoA = holo-[ACP] + adenosine 3',5'-bisphosphate + H(+). In terms of biological role, transfers the 4'-phosphopantetheine moiety from coenzyme A to a Ser of acyl-carrier-protein. The sequence is that of Holo-[acyl-carrier-protein] synthase from Koribacter versatilis (strain Ellin345).